The following is a 635-amino-acid chain: DNA mismatch repair protein MutL (635 aa).

Residues 352–380 (KAALQRGWVPPGAGRPGEGGGRAAPPPWR) are disordered.

Belongs to the DNA mismatch repair MutL/HexB family.

This protein is involved in the repair of mismatches in DNA. It is required for dam-dependent methyl-directed DNA mismatch repair. May act as a 'molecular matchmaker', a protein that promotes the formation of a stable complex between two or more DNA-binding proteins in an ATP-dependent manner without itself being part of a final effector complex. The protein is DNA mismatch repair protein MutL of Symbiobacterium thermophilum (strain DSM 24528 / JCM 14929 / IAM 14863 / T).